A 423-amino-acid chain; its full sequence is GTPase ERA-like, chloroplastic (423 aa).

The N-terminal 60 residues, 1–60, are a transit peptide targeting the chloroplast; that stretch reads MELGLALRLVAPPPRLPCRALQPPPMPCFSPCAARRSRIRSSRLERRVGVVVSGGSMASL. Residues 124-294 form the Era-type G domain; the sequence is RSGYVAVLGK…KEWILSKLPL (171 aa). A G1 region spans residues 132-139; that stretch reads GKPNVGKS. 132–139 is a GTP binding site; that stretch reads GKPNVGKS. Positions 158–162 are G2; it reads QTTRH. The segment at 179 to 182 is G3; it reads DTPG. GTP-binding positions include 179-183 and 244-247; these read DTPGV and NKKD. The segment at 244–247 is G4; that stretch reads NKKD. Positions 273–275 are G5; it reads ISA. Residues 325–402 enclose the KH type-2 domain; it reads YRQEIPYACQ…YLEIMVKVKE (78 aa).

It belongs to the TRAFAC class TrmE-Era-EngA-EngB-Septin-like GTPase superfamily. Era GTPase family.

The protein resides in the plastid. The protein localises to the chloroplast stroma. It localises to the chloroplast nucleoid. Nuclear genome-encoded probable GTPase involved in ribosome biogenesis in chloroplasts. Plays a role in 16S rRNA maturation in plastids and may contribute to the assembly of the small (30S) ribosomal subunit. This Oryza sativa subsp. japonica (Rice) protein is GTPase ERA-like, chloroplastic.